Consider the following 626-residue polypeptide: MSEQHNQPGFTDQSLIRNFCIIAHIDHGKSTVADRILQLSGIVPEREMRDRFLDRMDIEQERGITIKSQAVRVPWSYDGQEYTLGMIDTPGHVDFTYEVSRALAACEGAVLLVDATQGIEAQTLSNLYMAIDHDLTIIPVLNKIDLPSAEPDKHAEEIASLIGCEPSDVLRVSGKTGEGVRELLDRIVVDVPAPTGDPDADARALIFDSVYDSYRGIVTYIRMVDGELRSREKLHMMGVGTTYDPIEIGVISPDMMPTRALGAGEVGYVITGAKDVSQSKVGDTITSTAHPATEPLPGYRDPQPMVYAGLFPIDNAQFPELREALDKLKLNDAALIYEPETSVALGFGFRCGFLGLLHMEIVSERLSREFGLDLISTAPNVPYEVTAEDGTVHRVTNPSEFPDGKIKRIVEPMVAADIITPKEFIGAVMDLCQEHRGTMSTMEYISTDRVEMHYRIPLAEIVFDFFDQLKSRTKGYASLDYHDDGEEAADLVKVDILIQGEKIDAFSAIVHRDKAYSYGVMMTKKLRELIPRQQFEIPIQAAIGSRIIARENIRALRKDVLAKCYGGDITRKRKLLEKQKAGKKRMKMLGHVEVPQEAFVAALSTGEGGNDRDTKDKIRAAQKSEG.

The 182-residue stretch at 14-195 (SLIRNFCIIA…RIVVDVPAPT (182 aa)) folds into the tr-type G domain. GTP-binding positions include 26–31 (DHGKST) and 142–145 (NKID). Residues 603-626 (LSTGEGGNDRDTKDKIRAAQKSEG) form a disordered region. Residues 609–626 (GNDRDTKDKIRAAQKSEG) show a composition bias toward basic and acidic residues.

The protein belongs to the TRAFAC class translation factor GTPase superfamily. Classic translation factor GTPase family. LepA subfamily.

The protein localises to the cell membrane. It catalyses the reaction GTP + H2O = GDP + phosphate + H(+). In terms of biological role, required for accurate and efficient protein synthesis under certain stress conditions. May act as a fidelity factor of the translation reaction, by catalyzing a one-codon backward translocation of tRNAs on improperly translocated ribosomes. Back-translocation proceeds from a post-translocation (POST) complex to a pre-translocation (PRE) complex, thus giving elongation factor G a second chance to translocate the tRNAs correctly. Binds to ribosomes in a GTP-dependent manner. This chain is Elongation factor 4, found in Bifidobacterium animalis subsp. lactis (strain AD011).